The chain runs to 721 residues: MESLHARLFPGLSINIQRSNGLIHPANISTVNVEKSCVSVEWIEGGTTKGKEIDIDDVAAINPELLQLLPLRPKDSLPLQENVTVPKQKRKSVNSKIPALKEGLRSRSTRMSTVSEVRIPAQENEMEVELPVPTNSRKQFAIPSHPRASCSTVTELPLLMVSEEAEEQAHSTRSTSSANPGNSVRRKSCIVKEMEKMKNKREEKRAQNSELRIKRAQEYDSSFPNWEFARMIKEFRVTMECSPLTVTDPIEEHRICVCVRKRPLNKQELAKKEIDVISVPSKCLLLVHEPKLKVDLTKYLENQAFCFDFAFDETASNEVVYRFTARPLVQTIFEGGKATCFAYGQTGSGKTHTMGGDLSGKSQNASKGIYAMASRDVFLLKNQPRYRNLNLEVYVTFFEIYNGKVFDLLNKKAKLRVLEDSRQQVQVVGLQEYLVTCADDVIKMINMGSACRTSGQTFANSNSSRSHACFQILLRTKGRLHGKFSLVDLAGNERGADTSSADRQTRMEGAEINKSLLALKECIRALGQNKAHTPFRESKLTQVLRDSFIGENSRTCMIAMISPGISSCEYTLNTLRYADRVKELSPHSGPSGEQPVQMETEVMEASSNGTSLTGNEEEELSSQMSSFNEAMTQIRELEERALEELREIIQQGPNWLELSEMTDQPDYDLETFVNKAESALTQQAKQAKHFSALREVIKALRLAMQLEEQASKQINSKKRHQ.

Positions 1-250 are globular; sequence MESLHARLFP…CSPLTVTDPI (250 aa). A phosphoserine mark is found at serine 3 and serine 19. Phosphoserine; by AURKB is present on serine 92. A Microtubule tip localization signal motif is present at residues 95–98; the sequence is SKIP. Residues serine 106, serine 108, serine 112, serine 162, serine 171, serine 183, and serine 188 each carry the phosphoserine modification. A disordered region spans residues 164 to 188; sequence EAEEQAHSTRSTSSANPGNSVRRKS. Residues 171–182 are compositionally biased toward polar residues; that stretch reads STRSTSSANPGN. A negative regulator of microtubule-binding region spans residues 203–234; it reads EKRAQNSELRIKRAQEYDSSFPNWEFARMIKE. Residues 254–584 enclose the Kinesin motor domain; that stretch reads RICVCVRKRP…LRYADRVKEL (331 aa). ATP contacts are provided by residues arginine 260 and 344 to 351; that span reads GQTGSGKT. 2 positions are modified to phosphoserine: serine 515 and serine 626. The stretch at 614–652 forms a coiled coil; the sequence is GNEEEELSSQMSSFNEAMTQIRELEERALEELREIIQQG.

It belongs to the TRAFAC class myosin-kinesin ATPase superfamily. Kinesin family. MCAK/KIF2 subfamily. In terms of assembly, interacts with CENPH. Interacts with MTUS2/TIP150; the interaction is direct. Interacts with MAPRE1; the interaction is direct, regulated by phosphorylation and is probably required for targeting to growing microtubule plus ends. Interacts with KIF18B at microtubule tips; this interaction increases the affinity of both partners for microtubule plus ends and is required for robust microtubule depolymerization. Phosphorylation by AURKA or AURKB strongly reduces KIF18B-binding. In terms of processing, phosphorylation by AURKB, regulates association with centromeres and kinetochores and the microtubule depolymerization activity. Post-translationally, ubiquitinated.

It is found in the cytoplasm. The protein localises to the cytoskeleton. The protein resides in the nucleus. It localises to the chromosome. Its subcellular location is the centromere. It is found in the kinetochore. Its function is as follows. In complex with KIF18B, constitutes the major microtubule plus-end depolymerizing activity in mitotic cells. Regulates the turnover of microtubules at the kinetochore and functions in chromosome segregation during mitosis. Plays a role in chromosome congression and is required for the lateral to end-on conversion of the chromosome-microtubule attachment. The sequence is that of Kinesin-like protein KIF2C (Kif2c) from Mus musculus (Mouse).